Reading from the N-terminus, the 224-residue chain is Cytidylate kinase (224 aa).

Residue glycine 11–threonine 19 coordinates ATP.

It belongs to the cytidylate kinase family. Type 1 subfamily.

It is found in the cytoplasm. It carries out the reaction CMP + ATP = CDP + ADP. The enzyme catalyses dCMP + ATP = dCDP + ADP. The protein is Cytidylate kinase of Lysinibacillus sphaericus (strain C3-41).